Here is a 168-residue protein sequence, read N- to C-terminus: GTP-dependent dephospho-CoA kinase (168 aa).

The GTP site is built by D49, I50, V51, D68, K70, and E120.

It belongs to the GTP-dependent DPCK family.

It carries out the reaction 3'-dephospho-CoA + GTP = GDP + CoA + H(+). It participates in cofactor biosynthesis; coenzyme A biosynthesis. Catalyzes the GTP-dependent phosphorylation of the 3'-hydroxyl group of dephosphocoenzyme A to form coenzyme A (CoA). The sequence is that of GTP-dependent dephospho-CoA kinase from Pyrobaculum islandicum (strain DSM 4184 / JCM 9189 / GEO3).